A 435-amino-acid chain; its full sequence is 5-hydroxybenzimidazole synthase (435 aa).

Substrate-binding positions include M95, Y124, H163, 186 to 188 (SKG), 227 to 230 (NGLR), and E266. H270 contributes to the Zn(2+) binding site. Residue Y293 participates in substrate binding. H334 contacts Zn(2+). Residues C410, C413, and C417 each contribute to the [4Fe-4S] cluster site.

Belongs to the ThiC family. 5-hydroxybenzimidazole synthase subfamily. In terms of assembly, homodimer. Requires [4Fe-4S] cluster as cofactor.

The catalysed reaction is 5-amino-1-(5-phospho-beta-D-ribosyl)imidazole + AH2 + S-adenosyl-L-methionine = 5-hydroxybenzimidazole + 5'-deoxyadenosine + formate + L-methionine + A + NH4(+) + phosphate + 2 H(+). It participates in cofactor biosynthesis; adenosylcobalamin biosynthesis. In terms of biological role, catalyzes the complex conversion of aminoimidazole ribotide (AIR) to 5-hydroxybenzimidazole (5-HBI) in a radical S-adenosyl-L-methionine (SAM)-dependent reaction. Is thus involved in the anaerobic biosynthesis of dimethylbenzimidazole (DMB), the lower axial ligand of vitamin B12 (cobalamin). This is 5-hydroxybenzimidazole synthase from Desulfuromonas acetoxidans (strain DSM 684 / 11070).